The sequence spans 1029 residues: E3 ubiquitin-protein ligase UPL6 (1029 aa).

Positions 1 to 20 are disordered; it reads MFFSGDPSTRKRVDLGGRST. Residues 8–20 show a composition bias toward basic and acidic residues; that stretch reads STRKRVDLGGRST. The IQ domain maps to 45–74; the sequence is QNSAALKIQKFFRGRRSMAIERSKVRHDFC. Residues 688–1029 enclose the HECT domain; that stretch reads SEDDLRSSIR…ISAEAGFDLS (342 aa). Cys997 acts as the Glycyl thioester intermediate in catalysis.

The protein belongs to the UPL family.

The enzyme catalyses S-ubiquitinyl-[E2 ubiquitin-conjugating enzyme]-L-cysteine + [acceptor protein]-L-lysine = [E2 ubiquitin-conjugating enzyme]-L-cysteine + N(6)-ubiquitinyl-[acceptor protein]-L-lysine.. It functions in the pathway protein modification; protein ubiquitination. Probable E3 ubiquitin-protein ligase which mediates ubiquitination and subsequent proteasomal degradation of target proteins. The chain is E3 ubiquitin-protein ligase UPL6 (UPL6) from Arabidopsis thaliana (Mouse-ear cress).